The following is a 192-amino-acid chain: Protein hunchback (192 aa).

2 disordered regions span residues 16 to 54 (SHHH…SNTN) and 152 to 192 (LTPP…KYMA). The segment covering 17–28 (HHHHHHHAHHSH) has biased composition (basic residues). Low complexity predominate over residues 32 to 41 (SNSNASSPHQ). A compositionally biased stretch (basic and acidic residues) spans 173–192 (EPEKEHDLMSNSSEDMKYMA).

The protein belongs to the hunchback C2H2-type zinc-finger protein family.

It is found in the nucleus. In terms of biological role, gap class segmentation protein that controls development of head structures. The sequence is that of Protein hunchback (hb) from Drosophila tanythrix (Fruit fly).